The following is a 67-amino-acid chain: Large ribosomal subunit protein uL29 (67 aa).

Belongs to the universal ribosomal protein uL29 family.

The sequence is that of Large ribosomal subunit protein uL29 from Methanothrix thermoacetophila (strain DSM 6194 / JCM 14653 / NBRC 101360 / PT) (Methanosaeta thermophila).